Consider the following 359-residue polypeptide: Dihydroorotate dehydrogenase (quinone) (359 aa).

FMN contacts are provided by residues 61–65 (AGYDK) and T85. Substrate is bound at residue K65. Substrate is bound at residue 110-114 (NRLGF). Residues N139 and N170 each contribute to the FMN site. A substrate-binding site is contributed by N170. The active-site Nucleophile is S173. Residue N175 coordinates substrate. Positions 211 and 239 each coordinate FMN. 240 to 241 (NT) is a substrate binding site. Residues G262, G291, and 312-313 (YT) contribute to the FMN site.

This sequence belongs to the dihydroorotate dehydrogenase family. Type 2 subfamily. As to quaternary structure, monomer. FMN is required as a cofactor.

It is found in the cell membrane. It catalyses the reaction (S)-dihydroorotate + a quinone = orotate + a quinol. Its pathway is pyrimidine metabolism; UMP biosynthesis via de novo pathway; orotate from (S)-dihydroorotate (quinone route): step 1/1. Catalyzes the conversion of dihydroorotate to orotate with quinone as electron acceptor. This chain is Dihydroorotate dehydrogenase (quinone), found in Mesorhizobium japonicum (strain LMG 29417 / CECT 9101 / MAFF 303099) (Mesorhizobium loti (strain MAFF 303099)).